Consider the following 312-residue polypeptide: tRNA uridine(34) hydroxylase (312 aa).

One can recognise a Rhodanese domain in the interval 130-225 (RGDEVVFFDG…YGEKFGNQGL (96 aa)). The active-site Cysteine persulfide intermediate is Cys-185.

This sequence belongs to the TrhO family.

The catalysed reaction is uridine(34) in tRNA + AH2 + O2 = 5-hydroxyuridine(34) in tRNA + A + H2O. In terms of biological role, catalyzes oxygen-dependent 5-hydroxyuridine (ho5U) modification at position 34 in tRNAs. The polypeptide is tRNA uridine(34) hydroxylase (Corynebacterium efficiens (strain DSM 44549 / YS-314 / AJ 12310 / JCM 11189 / NBRC 100395)).